The following is an 89-amino-acid chain: MSAPRFRNGTFKRTLKRVPGGRKVEHYKKKKPSKHVCAKCGKVLDAVPRGRPYEIRKLSKNQRRPNRPYGGMYCTNCTKEIIKKEARSL.

Residues 1–29 form a disordered region; sequence MSAPRFRNGTFKRTLKRVPGGRKVEHYKK. Over residues 13-29 the composition is skewed to basic residues; it reads RTLKRVPGGRKVEHYKK.

It belongs to the eukaryotic ribosomal protein eL34 family.

This chain is Large ribosomal subunit protein eL34, found in Methanosphaera stadtmanae (strain ATCC 43021 / DSM 3091 / JCM 11832 / MCB-3).